The sequence spans 1959 residues: Myosin-9 (1959 aa).

Residues 27 to 77 (AAKKLVWVPSEKSGFEAASLKEEVGDEAIVELAENGKKVKVNKDDIQKMNP) form the Myosin N-terminal SH3-like domain. The Myosin motor domain maps to 81–776 (SKVEDMAELT…VLAHLEEERD (696 aa)). 174–181 (GESGAGKT) lines the ATP pocket. The interval 654 to 676 (LAKLMATLRNTNPNFVRCIIPNH) is actin-binding. Positions 779–808 (ITDVIIGFQACCRGYLARKAFAKRQQQLTA) constitute an IQ domain. The stretch at 837 to 1925 (LLQVSRQEEE…LKSKLRRGDL (1089 aa)) forms a coiled coil. 4 disordered regions span residues 1118 to 1168 (EDLE…REQE), 1694 to 1717 (RAKR…SGKG), 1879 to 1917 (LEEA…SSLK), and 1936 to 1959 (KGTG…KATE). Basic and acidic residues-rich tracts occupy residues 1122–1148 (SERA…KTEL) and 1694–1704 (RAKRQAQQERD). Positions 1947 to 1959 (DGKAEAGDAKATE) are enriched in basic and acidic residues.

The protein belongs to the TRAFAC class myosin-kinesin ATPase superfamily. Myosin family. Myosin is a hexameric protein that consists of 2 heavy chain subunits (MHC), 2 alkali light chain subunits (MLC) and 2 regulatory light chain subunits (MLC-2). Expressed in fibroblasts, brain, lung, kidney, spleen, and skeletal, cardiac and smooth muscles.

It localises to the cytoplasm. It is found in the cytoskeleton. The protein localises to the cell cortex. The protein resides in the cytoplasmic vesicle. Its subcellular location is the secretory vesicle. It localises to the cortical granule. Functionally, cellular myosin that appears to play a role in cytokinesis, cell shape, and specialized functions such as secretion and capping. The sequence is that of Myosin-9 (MYH9) from Gallus gallus (Chicken).